The primary structure comprises 651 residues: DNA mismatch repair protein MutL (651 aa).

It belongs to the DNA mismatch repair MutL/HexB family.

In terms of biological role, this protein is involved in the repair of mismatches in DNA. It is required for dam-dependent methyl-directed DNA mismatch repair. May act as a 'molecular matchmaker', a protein that promotes the formation of a stable complex between two or more DNA-binding proteins in an ATP-dependent manner without itself being part of a final effector complex. The chain is DNA mismatch repair protein MutL from Streptococcus mutans serotype c (strain ATCC 700610 / UA159).